Consider the following 163-residue polypeptide: Nucleotide-binding protein all4662 (163 aa).

It belongs to the YajQ family.

Nucleotide-binding protein. This chain is Nucleotide-binding protein all4662, found in Nostoc sp. (strain PCC 7120 / SAG 25.82 / UTEX 2576).